Here is a 436-residue protein sequence, read N- to C-terminus: Gamma-glutamyl phosphate reductase (436 aa).

Belongs to the gamma-glutamyl phosphate reductase family.

It localises to the cytoplasm. The catalysed reaction is L-glutamate 5-semialdehyde + phosphate + NADP(+) = L-glutamyl 5-phosphate + NADPH + H(+). It functions in the pathway amino-acid biosynthesis; L-proline biosynthesis; L-glutamate 5-semialdehyde from L-glutamate: step 2/2. Functionally, catalyzes the NADPH-dependent reduction of L-glutamate 5-phosphate into L-glutamate 5-semialdehyde and phosphate. The product spontaneously undergoes cyclization to form 1-pyrroline-5-carboxylate. The protein is Gamma-glutamyl phosphate reductase of Salinibacter ruber (strain DSM 13855 / M31).